Consider the following 92-residue polypeptide: RNA-binding protein Hfq (92 aa).

The 60-residue stretch at 9-68 (DPFLNALRRERVPVSIYLVNGIKLQGQVESFDQFVILLKNTVSQMVYKHAISTVVPSRPF) folds into the Sm domain.

Belongs to the Hfq family. In terms of assembly, homohexamer.

RNA chaperone that binds small regulatory RNA (sRNAs) and mRNAs to facilitate mRNA translational regulation in response to envelope stress, environmental stress and changes in metabolite concentrations. Also binds with high specificity to tRNAs. This Shewanella piezotolerans (strain WP3 / JCM 13877) protein is RNA-binding protein Hfq.